Here is a 199-residue protein sequence, read N- to C-terminus: Recombination protein RecR (199 aa).

The C4-type zinc finger occupies 57 to 72; the sequence is CEKCNNFTEEVVCELC. The Toprim domain occupies 80-175; the sequence is ALLCVVEMPA…KITRIARGLP (96 aa).

It belongs to the RecR family.

Its function is as follows. May play a role in DNA repair. It seems to be involved in an RecBC-independent recombinational process of DNA repair. It may act with RecF and RecO. The polypeptide is Recombination protein RecR (Nitrosospira multiformis (strain ATCC 25196 / NCIMB 11849 / C 71)).